An 830-amino-acid polypeptide reads, in one-letter code: Protein PAM1 (830 aa).

Residues 379 to 400 (LQNSESTLKNEIKELQSQVLSL) are a coiled coil. Disordered stretches follow at residues 426–488 (DNSL…ETSL), 513–558 (ALQQ…SQPQ), 648–699 (NGMN…NYNI), and 727–757 (SRNADSAPCVNQLNSDSPPQLQSLSQNGTSK). Positions 433-444 (PNSNTNGISPSD) are enriched in polar residues. Residues 481–514 (LSRDETSLKERELEVRMKELELQERELELQRKAL) adopt a coiled-coil conformation. 2 stretches are compositionally biased toward low complexity: residues 513 to 527 (ALQQQQQYQQRPPKQ) and 538 to 555 (SGNNNNKSYNPNRKSSYS). The segment covering 651-699 (NGTQSRLNSLSNQSTFRSQQGPPITQQKSFQNNGGSMRTNRIPSANYNI) has biased composition (polar residues). Phosphoserine is present on residues Ser-659 and Ser-732. The segment covering 738 to 753 (QLNSDSPPQLQSLSQN) has biased composition (low complexity). Ser-767 is subject to Phosphoserine. Positions 796 to 806 (AATANNISTMG) are enriched in polar residues. The tract at residues 796–830 (AATANNISTMGDESRKEDVKEKKKKKFSFFGKRKK) is disordered. Over residues 807 to 816 (DESRKEDVKE) the composition is skewed to basic and acidic residues. Over residues 817–830 (KKKKKFSFFGKRKK) the composition is skewed to basic residues.

Belongs to the PAM1/SVL3 family.

In terms of biological role, not known. It is a suppressor of protein phosphatase 2A depletion. This chain is Protein PAM1 (PAM1), found in Saccharomyces cerevisiae (strain ATCC 204508 / S288c) (Baker's yeast).